A 128-amino-acid polypeptide reads, in one-letter code: Gas vesicle protein O (128 aa).

The interval 1-49 (MANTPEDTQNTQNDSQNDSQNDSQKDTSARATSARAHQQPQEQPPSPMR) is disordered. Positions 7–22 (DTQNTQNDSQNDSQND) are enriched in low complexity. Residues 29-41 (ARATSARAHQQPQ) show a composition bias toward polar residues.

Belongs to the gas vesicle GvpO family.

The protein resides in the gas vesicle. Functionally, a minor component of the gas vesicle. May play a role in transcription and/or RNA stability and in GV assembly. Gas vesicles are hollow, gas filled proteinaceous nanostructures found in some microorganisms. It is not clear what function gas vesicles perform in soil bacteria. This chain is Gas vesicle protein O, found in Streptomyces sp. (strain CB03234).